The sequence spans 321 residues: Probable 1-aminocyclopropane-1-carboxylate oxidase (321 aa).

Residues 159 to 259 (PTFGTKVSNY…RMSIASFYNP (101 aa)) enclose the Fe2OG dioxygenase domain. Fe cation contacts are provided by histidine 183, aspartate 185, and histidine 240.

This sequence belongs to the iron/ascorbate-dependent oxidoreductase family. It depends on Fe cation as a cofactor.

It carries out the reaction 1-aminocyclopropane-1-carboxylate + L-ascorbate + O2 = ethene + L-dehydroascorbate + hydrogen cyanide + CO2 + 2 H2O. Its pathway is alkene biosynthesis; ethylene biosynthesis via S-adenosyl-L-methionine; ethylene from S-adenosyl-L-methionine: step 2/2. This chain is Probable 1-aminocyclopropane-1-carboxylate oxidase (ACO), found in Dianthus caryophyllus (Carnation).